The primary structure comprises 115 residues: NAD(P)H-quinone oxidoreductase subunit M (115 aa).

It belongs to the complex I NdhM subunit family. NDH-1 can be composed of about 15 different subunits; different subcomplexes with different compositions have been identified which probably have different functions.

Its subcellular location is the cellular thylakoid membrane. The catalysed reaction is a plastoquinone + NADH + (n+1) H(+)(in) = a plastoquinol + NAD(+) + n H(+)(out). It catalyses the reaction a plastoquinone + NADPH + (n+1) H(+)(in) = a plastoquinol + NADP(+) + n H(+)(out). In terms of biological role, NDH-1 shuttles electrons from an unknown electron donor, via FMN and iron-sulfur (Fe-S) centers, to quinones in the respiratory and/or the photosynthetic chain. The immediate electron acceptor for the enzyme in this species is believed to be plastoquinone. Couples the redox reaction to proton translocation, and thus conserves the redox energy in a proton gradient. Cyanobacterial NDH-1 also plays a role in inorganic carbon-concentration. This is NAD(P)H-quinone oxidoreductase subunit M from Prochlorococcus marinus (strain MIT 9312).